The sequence spans 79 residues: Short neurotoxin 3 (79 aa).

Positions 1–21 (MKTLLLTLVMVTIMCLDLGYT) are cleaved as a signal peptide. 4 cysteine pairs are disulfide-bonded: Cys24–Cys41, Cys34–Cys59, Cys63–Cys71, and Cys72–Cys77.

It belongs to the three-finger toxin family. Short-chain subfamily. Type III alpha-neurotoxin sub-subfamily. Expressed by the venom gland.

The protein localises to the secreted. In terms of biological role, binds with high affinity to muscle nicotinic acetylcholine receptor (nAChR) and hinders acetylcholine binding to the receptor, thereby impairing neuromuscular transmission. Competes with the binding of alpha-bungarotoxin on muscle AChR (from Torpedo) with an IC(50) of 0.30 uM. Causes muscle paralysis, spasms and increased respiration. This Pseudonaja textilis (Eastern brown snake) protein is Short neurotoxin 3.